The primary structure comprises 323 residues: MLSVNLASLPIVEEMISRKEDLNIEVIKLENGATVLDCGVNVMGSFEAGKLFTKICLGGLAHVGISISGSLDNKLVLPCVKIKTSHPAIATLGSQKAGWSVSVGKYFAMGSGPARALAMMPKATYEEIDYRDEADVAILCLESSQLPDENVADHVAEKCGVDVSKVYLLVAPTASMVGAVQISGRVVENGTYKMLEALHFDVRKVKFAAGIAPVAPVIGDDLKMMGATNDMVLYGGRTFYYVKSDEGDDIENLCKSLPSCSAETYGKPFLDVFKEANYDFYKIDKGMFAPAIVTINDLRTGKLMSYGETNVDVIKKSLKFSQL.

Belongs to the MCH family.

The protein localises to the cytoplasm. It catalyses the reaction 5,10-methenyl-5,6,7,8-tetrahydromethanopterin + H2O = N(5)-formyl-5,6,7,8-tetrahydromethanopterin + H(+). Its pathway is one-carbon metabolism; methanogenesis from CO(2); 5,10-methenyl-5,6,7,8-tetrahydromethanopterin from CO(2): step 3/3. Its function is as follows. Catalyzes the reversible interconversion of 5-formyl-H(4)MPT to methenyl-H(4)MPT(+). The chain is Methenyltetrahydromethanopterin cyclohydrolase from Methanococcus maripaludis (strain DSM 14266 / JCM 13030 / NBRC 101832 / S2 / LL).